Reading from the N-terminus, the 274-residue chain is Undecaprenyl-diphosphatase (274 aa).

7 consecutive transmembrane segments (helical) span residues 21-39, 44-64, 85-105, 109-129, 185-205, 214-234, and 247-267; these read FLPI…LLGF, AQVF…LVYW, FNLA…GKAI, LFTP…ILWA, ATDF…VYSL, VADL…AWLC, and FVPF…TAST.

It belongs to the UppP family.

The protein resides in the cell inner membrane. It carries out the reaction di-trans,octa-cis-undecaprenyl diphosphate + H2O = di-trans,octa-cis-undecaprenyl phosphate + phosphate + H(+). Its function is as follows. Catalyzes the dephosphorylation of undecaprenyl diphosphate (UPP). Confers resistance to bacitracin. The protein is Undecaprenyl-diphosphatase of Verminephrobacter eiseniae (strain EF01-2).